A 160-amino-acid polypeptide reads, in one-letter code: Photosystem II extrinsic protein V (160 aa).

Positions 1 to 25 (MKRFILLAIATVFFFCQFQTNPVNA) are cleaved as a signal peptide. Residues C62, C65, H66, and H117 each contribute to the heme c site.

The protein belongs to the cytochrome c family. PsbV subfamily. PSII is composed of 1 copy each of membrane proteins PsbA, PsbB, PsbC, PsbD, PsbE, PsbF, PsbH, PsbI, PsbJ, PsbK, PsbL, PsbM, PsbT, PsbX, PsbY, PsbZ, Psb30/Ycf12, peripheral proteins PsbO, CyanoQ (PsbQ), PsbU, PsbV and a large number of cofactors. It forms dimeric complexes. The cofactor is heme c.

Its subcellular location is the cellular thylakoid membrane. Functionally, one of the extrinsic, lumenal subunits of photosystem II (PSII). PSII is a light-driven water plastoquinone oxidoreductase, using light energy to abstract electrons from H(2)O, generating a proton gradient subsequently used for ATP formation. The extrinsic proteins stabilize the structure of photosystem II oxygen-evolving complex (OEC), the ion environment of oxygen evolution and protect the OEC against heat-induced inactivation. Low-potential cytochrome c that plays a role in the OEC of PSII. This Rippkaea orientalis (strain PCC 8801 / RF-1) (Cyanothece sp. (strain PCC 8801)) protein is Photosystem II extrinsic protein V.